A 98-amino-acid chain; its full sequence is Co-chaperonin GroES (98 aa).

The protein belongs to the GroES chaperonin family. In terms of assembly, heptamer of 7 subunits arranged in a ring. Interacts with the chaperonin GroEL.

It is found in the cytoplasm. Functionally, together with the chaperonin GroEL, plays an essential role in assisting protein folding. The GroEL-GroES system forms a nano-cage that allows encapsulation of the non-native substrate proteins and provides a physical environment optimized to promote and accelerate protein folding. GroES binds to the apical surface of the GroEL ring, thereby capping the opening of the GroEL channel. This Neorickettsia sennetsu (strain ATCC VR-367 / Miyayama) (Ehrlichia sennetsu) protein is Co-chaperonin GroES.